The sequence spans 190 residues: NADH-quinone oxidoreductase subunit B (190 aa).

The [4Fe-4S] cluster site is built by Cys39, Cys40, Cys104, and Cys135.

The protein belongs to the complex I 20 kDa subunit family. NDH-1 is composed of 14 different subunits. Subunits NuoB, C, D, E, F, and G constitute the peripheral sector of the complex. [4Fe-4S] cluster is required as a cofactor.

It is found in the cell inner membrane. It catalyses the reaction a quinone + NADH + 5 H(+)(in) = a quinol + NAD(+) + 4 H(+)(out). Functionally, NDH-1 shuttles electrons from NADH, via FMN and iron-sulfur (Fe-S) centers, to quinones in the respiratory chain. The immediate electron acceptor for the enzyme in this species is believed to be a menaquinone. Couples the redox reaction to proton translocation (for every two electrons transferred, four hydrogen ions are translocated across the cytoplasmic membrane), and thus conserves the redox energy in a proton gradient. In Prosthecochloris aestuarii (strain DSM 271 / SK 413), this protein is NADH-quinone oxidoreductase subunit B.